Reading from the N-terminus, the 418-residue chain is uncharacterized protein (418 aa).

This sequence belongs to the poxviruses C4/C10 family.

This is an uncharacterized protein from Fowlpox virus (strain NVSL) (FPV).